The primary structure comprises 96 residues: Co-chaperonin GroES (96 aa).

The protein belongs to the GroES chaperonin family. Heptamer of 7 subunits arranged in a ring. Interacts with the chaperonin GroEL.

It localises to the cytoplasm. Functionally, together with the chaperonin GroEL, plays an essential role in assisting protein folding. The GroEL-GroES system forms a nano-cage that allows encapsulation of the non-native substrate proteins and provides a physical environment optimized to promote and accelerate protein folding. GroES binds to the apical surface of the GroEL ring, thereby capping the opening of the GroEL channel. This is Co-chaperonin GroES from Actinobacillus pleuropneumoniae serotype 5b (strain L20).